The chain runs to 381 residues: Alkanesulfonate monooxygenase (381 aa).

It belongs to the SsuD family. Homotetramer.

It catalyses the reaction an alkanesulfonate + FMNH2 + O2 = an aldehyde + FMN + sulfite + H2O + 2 H(+). Functionally, catalyzes the desulfonation of aliphatic sulfonates. The polypeptide is Alkanesulfonate monooxygenase (Escherichia coli O9:H4 (strain HS)).